Consider the following 335-residue polypeptide: Putative peroxisomal biogenesis factor 19 (335 aa).

2 disordered regions span residues 14–70 (LETQ…LGND) and 104–124 (YNKD…PSEE). 2 stretches are compositionally biased toward low complexity: residues 22–55 (PTTT…PSTI) and 109–119 (NNNSDDSNNGG).

The protein belongs to the peroxin-19 family.

It is found in the peroxisome. The polypeptide is Putative peroxisomal biogenesis factor 19 (pex19) (Dictyostelium discoideum (Social amoeba)).